A 212-amino-acid polypeptide reads, in one-letter code: Pyrrolidone-carboxylate peptidase (212 aa).

Residues glutamate 78, cysteine 141, and histidine 165 contribute to the active site.

It belongs to the peptidase C15 family. As to quaternary structure, homotetramer.

The protein resides in the cytoplasm. The catalysed reaction is Release of an N-terminal pyroglutamyl group from a polypeptide, the second amino acid generally not being Pro.. Its function is as follows. Removes 5-oxoproline from various penultimate amino acid residues except L-proline. The chain is Pyrrolidone-carboxylate peptidase (pcp) from Staphylococcus aureus.